A 289-amino-acid polypeptide reads, in one-letter code: 4-hydroxybenzoate octaprenyltransferase (289 aa).

7 helical membrane-spanning segments follow: residues 33 to 53, 99 to 119, 141 to 161, 163 to 183, 213 to 233, 238 to 258, and 268 to 288; these read LWAL…AVFV, LFVV…TMTI, LPQV…FAAV, ESVP…AVAY, LIIG…GRLN, EFYW…KLIV, and AFLN…MSYW.

It belongs to the UbiA prenyltransferase family. The cofactor is Mg(2+).

The protein resides in the cell inner membrane. The enzyme catalyses all-trans-octaprenyl diphosphate + 4-hydroxybenzoate = 4-hydroxy-3-(all-trans-octaprenyl)benzoate + diphosphate. The protein operates within cofactor biosynthesis; ubiquinone biosynthesis. In terms of biological role, catalyzes the prenylation of para-hydroxybenzoate (PHB) with an all-trans polyprenyl group. Mediates the second step in the final reaction sequence of ubiquinone-8 (UQ-8) biosynthesis, which is the condensation of the polyisoprenoid side chain with PHB, generating the first membrane-bound Q intermediate 3-octaprenyl-4-hydroxybenzoate. This Enterobacter sp. (strain 638) protein is 4-hydroxybenzoate octaprenyltransferase.